We begin with the raw amino-acid sequence, 392 residues long: Phosphoglycerate kinase (392 aa).

Substrate-binding positions include 19–21, Arg34, 57–60, Arg116, and Arg149; these read DYN and HLGR. Residues Lys199, Glu321, and 347–350 contribute to the ATP site; that span reads GGDS.

The protein belongs to the phosphoglycerate kinase family. As to quaternary structure, monomer.

Its subcellular location is the cytoplasm. The catalysed reaction is (2R)-3-phosphoglycerate + ATP = (2R)-3-phospho-glyceroyl phosphate + ADP. Its pathway is carbohydrate degradation; glycolysis; pyruvate from D-glyceraldehyde 3-phosphate: step 2/5. The polypeptide is Phosphoglycerate kinase (Thermomicrobium roseum (strain ATCC 27502 / DSM 5159 / P-2)).